A 239-amino-acid polypeptide reads, in one-letter code: Orotidine 5'-phosphate decarboxylase (239 aa).

Residues D15, K37, 64 to 73 (DLKYHDIPNT), T126, R187, Q196, G216, and R217 contribute to the substrate site. K66 serves as the catalytic Proton donor.

This sequence belongs to the OMP decarboxylase family. Type 1 subfamily. Homodimer.

The enzyme catalyses orotidine 5'-phosphate + H(+) = UMP + CO2. The protein operates within pyrimidine metabolism; UMP biosynthesis via de novo pathway; UMP from orotate: step 2/2. Its function is as follows. Catalyzes the decarboxylation of orotidine 5'-monophosphate (OMP) to uridine 5'-monophosphate (UMP). In Geotalea daltonii (strain DSM 22248 / JCM 15807 / FRC-32) (Geobacter daltonii), this protein is Orotidine 5'-phosphate decarboxylase.